Here is a 159-residue protein sequence, read N- to C-terminus: Dehydratase GME11372 (159 aa).

Active-site residues include H79 and H104.

The protein belongs to the scytalone dehydratase family. In terms of assembly, homotrimer. Each subunit contains an active site, located in the central part of the hydrophobic core of the monomer, which functions independently.

It participates in secondary metabolite biosynthesis. Functionally, dehydratase; part of the gene cluster that mediates the biosynthesis of dibenzodioxocinones such as pestalotiollide B, a novel class of inhibitors against cholesterol ester transfer protein (CEPT). The biosynthesis initiates from condensation of acetate and malonate units catalyzed by the non-reducing PKS pks8/GME11356. Pks8/GME11356 lacks a thioesterase (TE) domain, which is important to the cyclizing of the third ring of atrochrysone carboxylic acid, and the esterase GME11355 might play the role of TE and catalyzes the cyclization reaction of the C ring. The lactamase-like protein GME11357 (or other beta-lactamases in Pestalotiopsis microspora) probably hydrolyzes the thioester bond between the ACP of pks8/GME11356 and the intermediate to release atrochrysone carboxylic acid, which is spontaneously dehydrates to form endocrocin anthrone. Endocrocin anthrone is further converted to emodin via the endocrocin intermediate. Emodin is then oxidized by several enzymes such as the Baeyer-Villiger oxidase GME11358, the oxidoreductase GME11367, the short chain dehydrogenase/reductase GME11373, as well as by other oxidoreductases from the cluster, to modify the A and C rings and open the B ring, and finally yield monodictyphenone. The prenyltransferase GME11375 may catalyze the addition reaction between the C5 side chains and the carbon bone of dibenzodioxocinones. The remaining biochemical reactions to the final product dibenzodioxocinones should be methylation catalyzed by methyltransferase GME11366 and reduction and lactonization reaction catalyzed by a series of oxidordeuctases. This Pestalotiopsis microspora protein is Dehydratase GME11372.